Reading from the N-terminus, the 312-residue chain is Acetylglutamate kinase (312 aa).

Substrate contacts are provided by residues 74–75 (GG), arginine 96, and asparagine 195.

It belongs to the acetylglutamate kinase family. ArgB subfamily.

It localises to the cytoplasm. The enzyme catalyses N-acetyl-L-glutamate + ATP = N-acetyl-L-glutamyl 5-phosphate + ADP. The protein operates within amino-acid biosynthesis; L-arginine biosynthesis; N(2)-acetyl-L-ornithine from L-glutamate: step 2/4. Functionally, catalyzes the ATP-dependent phosphorylation of N-acetyl-L-glutamate. The chain is Acetylglutamate kinase from Nocardioides sp. (strain ATCC BAA-499 / JS614).